The primary structure comprises 193 residues: Bcl-2-binding component 3 (193 aa).

Disordered regions lie at residues 1–32 (MARARQEGSSPEPVEGLARDSPRPFPLGRLMP) and 71–131 (ALGG…VEEE). At Ser10 the chain carries Phosphoserine. A BH3 motif is present at residues 137 to 151 (IGAQLRRMADDLNAQ).

Belongs to the Bcl-2 family. In terms of assembly, interacts with MCL1 and BCL2A1. Interacts (via BH3 domain) with BCL2 and BCL2L1/BCL-XL. Interacts (via BH3 domain) with NOL3/ARC (via CARD domain); this interaction prevents BBC3 association with BCL2 and results in CASP8 activation.

Its subcellular location is the mitochondrion. Essential mediator of p53/TP53-dependent and p53/TP53-independent apoptosis. Promotes partial unfolding of BCL2L1 and dissociation of BCL2L1 from p53/TP53, releasing the bound p53/TP53 to induce apoptosis. Regulates ER stress-induced neuronal apoptosis. This Rattus norvegicus (Rat) protein is Bcl-2-binding component 3 (Bbc3).